We begin with the raw amino-acid sequence, 600 residues long: NADH-quinone oxidoreductase subunit C/D (600 aa).

Residues 1-190 are NADH dehydrogenase I subunit C; the sequence is MVNNMTDLTA…SPFELTKAKQ (190 aa). Residues 214-600 form an NADH dehydrogenase I subunit D region; the sequence is DFMFLNLGPN…IDFVMSDVDR (387 aa).

This sequence in the N-terminal section; belongs to the complex I 30 kDa subunit family. In the C-terminal section; belongs to the complex I 49 kDa subunit family. As to quaternary structure, NDH-1 is composed of 13 different subunits. Subunits NuoB, CD, E, F, and G constitute the peripheral sector of the complex.

It is found in the cell inner membrane. It carries out the reaction a quinone + NADH + 5 H(+)(in) = a quinol + NAD(+) + 4 H(+)(out). NDH-1 shuttles electrons from NADH, via FMN and iron-sulfur (Fe-S) centers, to quinones in the respiratory chain. The immediate electron acceptor for the enzyme in this species is believed to be ubiquinone. Couples the redox reaction to proton translocation (for every two electrons transferred, four hydrogen ions are translocated across the cytoplasmic membrane), and thus conserves the redox energy in a proton gradient. The sequence is that of NADH-quinone oxidoreductase subunit C/D from Escherichia coli O157:H7.